Here is a 212-residue protein sequence, read N- to C-terminus: Major fimbrial subunit (212 aa).

The first 18 residues, 1-18 (MKKTLLGSLILLAFATNA), serve as a signal peptide directing secretion. Cys42 and Cys82 form a disulfide bridge.

Belongs to the fimbrial protein family.

The protein resides in the fimbrium. Functionally, mediates adherence to oropharyngeal epithelial cells. Helps the airway colonization process. This is Major fimbrial subunit (hifA) from Haemophilus influenzae.